Consider the following 275-residue polypeptide: Ribosomal RNA small subunit methyltransferase A (275 aa).

Asn21, Leu23, Gly48, Glu69, Asp94, and Asn115 together coordinate S-adenosyl-L-methionine.

It belongs to the class I-like SAM-binding methyltransferase superfamily. rRNA adenine N(6)-methyltransferase family. RsmA subfamily.

The protein resides in the cytoplasm. The enzyme catalyses adenosine(1518)/adenosine(1519) in 16S rRNA + 4 S-adenosyl-L-methionine = N(6)-dimethyladenosine(1518)/N(6)-dimethyladenosine(1519) in 16S rRNA + 4 S-adenosyl-L-homocysteine + 4 H(+). Its function is as follows. Specifically dimethylates two adjacent adenosines (A1518 and A1519) in the loop of a conserved hairpin near the 3'-end of 16S rRNA in the 30S particle. May play a critical role in biogenesis of 30S subunits. This Clostridium botulinum (strain Loch Maree / Type A3) protein is Ribosomal RNA small subunit methyltransferase A.